The primary structure comprises 286 residues: Protein FAM87A (286 aa).

Helical transmembrane passes span 68 to 88 and 161 to 181; these read YLHSSLFLSILFQVTLLETAL and SFFVVFQAWSLMILQVLGDML.

This sequence belongs to the FAM87 family.

It localises to the membrane. In Homo sapiens (Human), this protein is Protein FAM87A (FAM87A).